A 208-amino-acid chain; its full sequence is ATP synthase subunit b (208 aa).

Over residues 1-18 the composition is skewed to polar residues; that stretch reads MFVSTAFAQTATESQPAS. The interval 1–26 is disordered; sequence MFVSTAFAQTATESQPASTAGEHGAA. The chain crosses the membrane as a helical span at residues 56 to 78; sequence SQVLWLAITFGLFYLFLSRVVLP.

It belongs to the ATPase B chain family. F-type ATPases have 2 components, F(1) - the catalytic core - and F(0) - the membrane proton channel. F(1) has five subunits: alpha(3), beta(3), gamma(1), delta(1), epsilon(1). F(0) has three main subunits: a(1), b(2) and c(10-14). The alpha and beta chains form an alternating ring which encloses part of the gamma chain. F(1) is attached to F(0) by a central stalk formed by the gamma and epsilon chains, while a peripheral stalk is formed by the delta and b chains.

It is found in the cell inner membrane. Functionally, f(1)F(0) ATP synthase produces ATP from ADP in the presence of a proton or sodium gradient. F-type ATPases consist of two structural domains, F(1) containing the extramembraneous catalytic core and F(0) containing the membrane proton channel, linked together by a central stalk and a peripheral stalk. During catalysis, ATP synthesis in the catalytic domain of F(1) is coupled via a rotary mechanism of the central stalk subunits to proton translocation. Component of the F(0) channel, it forms part of the peripheral stalk, linking F(1) to F(0). The protein is ATP synthase subunit b of Brucella melitensis biotype 1 (strain ATCC 23456 / CCUG 17765 / NCTC 10094 / 16M).